A 204-amino-acid chain; its full sequence is Imidazoleglycerol-phosphate dehydratase (204 aa).

The protein belongs to the imidazoleglycerol-phosphate dehydratase family.

Its subcellular location is the cytoplasm. The catalysed reaction is D-erythro-1-(imidazol-4-yl)glycerol 3-phosphate = 3-(imidazol-4-yl)-2-oxopropyl phosphate + H2O. Its pathway is amino-acid biosynthesis; L-histidine biosynthesis; L-histidine from 5-phospho-alpha-D-ribose 1-diphosphate: step 6/9. The polypeptide is Imidazoleglycerol-phosphate dehydratase (Rhodococcus opacus (strain B4)).